The primary structure comprises 252 residues: Chitooligosaccharide deacetylase (252 aa).

Residues H61 and H125 each coordinate Mg(2+).

The protein belongs to the YdjC deacetylase family. ChbG subfamily. In terms of assembly, homodimer. Requires Mg(2+) as cofactor.

It is found in the cytoplasm. It carries out the reaction N,N'-diacetylchitobiose + H2O = N-acetyl-beta-D-glucosaminyl-(1-&gt;4)-D-glucosamine + acetate. The enzyme catalyses diacetylchitobiose-6'-phosphate + H2O = N'-monoacetylchitobiose-6'-phosphate + acetate. It participates in glycan degradation; chitin degradation. In terms of biological role, involved in the degradation of chitin. ChbG is essential for growth on the acetylated chitooligosaccharides chitobiose and chitotriose but is dispensable for growth on cellobiose and chitosan dimer, the deacetylated form of chitobiose. Deacetylation of chitobiose-6-P and chitotriose-6-P is necessary for both the activation of the chb promoter by the regulatory protein ChbR and the hydrolysis of phosphorylated beta-glucosides by the phospho-beta-glucosidase ChbF. Catalyzes the removal of only one acetyl group from chitobiose-6-P to yield monoacetylchitobiose-6-P, the inducer of ChbR and the substrate of ChbF. The sequence is that of Chitooligosaccharide deacetylase from Salmonella heidelberg (strain SL476).